The following is a 224-amino-acid chain: Adenylate kinase (224 aa).

Residue 10-15 participates in ATP binding; sequence GSGKST. The interval 30-59 is NMP; sequence SSGDLIRGEIERKSSLGLEMAAYLSRGDLI. AMP-binding positions include Ser31, Arg36, 57-59, 83-86, and Gln90; these read DLI and GYPR. The tract at residues 124–161 is LID; that stretch reads GRRICPNCGAVYHITYNPPKVPGICDVCGTKLIQRTDD. ATP is bound at residue Arg125. Residues Cys128 and Cys131 each contribute to the Zn(2+) site. Position 134 to 135 (134 to 135) interacts with ATP; sequence VY. The Zn(2+) site is built by Cys148 and Cys151. 2 residues coordinate AMP: Arg158 and Arg169. Gly197 contributes to the ATP binding site.

It belongs to the adenylate kinase family. As to quaternary structure, monomer.

The protein resides in the cytoplasm. The catalysed reaction is AMP + ATP = 2 ADP. It participates in purine metabolism; AMP biosynthesis via salvage pathway; AMP from ADP: step 1/1. Functionally, catalyzes the reversible transfer of the terminal phosphate group between ATP and AMP. Plays an important role in cellular energy homeostasis and in adenine nucleotide metabolism. The polypeptide is Adenylate kinase (Thermococcus gammatolerans (strain DSM 15229 / JCM 11827 / EJ3)).